A 246-amino-acid chain; its full sequence is MKAVIVIPARLKSTRLPEKMLVDLDGKPLVVRTYEQAKKSRLASDVLLAVDSKRLLDIAESFGCKAVLTPENLQSGTDRIAFAAKSIDADVVINVQGDEPLIPPEMIDSAILPFIENAALPCATLIQPIVSDVPEILQNPNVVKVVTDKNGYALYFSRSPIPYQRNSDAQPKIFRHIGLYAFRKPALETFTTLPPSMLEETERLEQLRLLENGIRIKCVITNLDSQAVDTADDLAKVKAILAKKLK.

The protein belongs to the KdsB family.

It is found in the cytoplasm. The enzyme catalyses 3-deoxy-alpha-D-manno-oct-2-ulosonate + CTP = CMP-3-deoxy-beta-D-manno-octulosonate + diphosphate. Its pathway is nucleotide-sugar biosynthesis; CMP-3-deoxy-D-manno-octulosonate biosynthesis; CMP-3-deoxy-D-manno-octulosonate from 3-deoxy-D-manno-octulosonate and CTP: step 1/1. The protein operates within bacterial outer membrane biogenesis; lipopolysaccharide biosynthesis. In terms of biological role, activates KDO (a required 8-carbon sugar) for incorporation into bacterial lipopolysaccharide in Gram-negative bacteria. The sequence is that of 3-deoxy-manno-octulosonate cytidylyltransferase from Chloroherpeton thalassium (strain ATCC 35110 / GB-78).